Here is a 242-residue protein sequence, read N- to C-terminus: MLLIPAIDLKGGNCVRLRQGRMEDDTVFSDDPVATAQRWVEAGAKRLHIVDLDGAVQGEPVNAHAIAAICAGFPDLEIQVGGGIRSEEQIETYIQAGVRYVIIGTQAVKAPGFVADATVSFPGHIMVGIDARDGKVATEGWSKLSRHDPIDLAQRFAADGIEAIIYTDISRDGMLSGPNISATVALAQAVPVPVIASGGIANLEQVLALKAHESDGITGAITGRAIYEGTLDFSQARAQAEA.

D8 serves as the catalytic Proton acceptor. The active-site Proton donor is the D130.

The protein belongs to the HisA/HisF family.

It localises to the cytoplasm. It catalyses the reaction 1-(5-phospho-beta-D-ribosyl)-5-[(5-phospho-beta-D-ribosylamino)methylideneamino]imidazole-4-carboxamide = 5-[(5-phospho-1-deoxy-D-ribulos-1-ylimino)methylamino]-1-(5-phospho-beta-D-ribosyl)imidazole-4-carboxamide. The protein operates within amino-acid biosynthesis; L-histidine biosynthesis; L-histidine from 5-phospho-alpha-D-ribose 1-diphosphate: step 4/9. The protein is 1-(5-phosphoribosyl)-5-[(5-phosphoribosylamino)methylideneamino] imidazole-4-carboxamide isomerase of Acidithiobacillus ferrooxidans (strain ATCC 53993 / BNL-5-31) (Leptospirillum ferrooxidans (ATCC 53993)).